A 670-amino-acid polypeptide reads, in one-letter code: DNA ligase (670 aa).

NAD(+)-binding positions include 32–36 (DSEYD), 81–82 (SL), and glutamate 114. The N6-AMP-lysine intermediate role is filled by lysine 116. Residues arginine 137, glutamate 174, lysine 291, and lysine 315 each contribute to the NAD(+) site. Zn(2+) is bound by residues cysteine 409, cysteine 412, cysteine 427, and cysteine 433. A BRCT domain is found at 592–670 (ASENLFKDKT…EEEFLAQITR (79 aa)).

Belongs to the NAD-dependent DNA ligase family. LigA subfamily. It depends on Mg(2+) as a cofactor. The cofactor is Mn(2+).

The enzyme catalyses NAD(+) + (deoxyribonucleotide)n-3'-hydroxyl + 5'-phospho-(deoxyribonucleotide)m = (deoxyribonucleotide)n+m + AMP + beta-nicotinamide D-nucleotide.. Functionally, DNA ligase that catalyzes the formation of phosphodiester linkages between 5'-phosphoryl and 3'-hydroxyl groups in double-stranded DNA using NAD as a coenzyme and as the energy source for the reaction. It is essential for DNA replication and repair of damaged DNA. This Haemophilus influenzae (strain PittEE) protein is DNA ligase.